A 301-amino-acid chain; its full sequence is Phosphoglycolate phosphatase 2 (301 aa).

The Nucleophile role is filled by D19.

Belongs to the HAD-like hydrolase superfamily. CbbY/CbbZ/Gph/YieH family.

It carries out the reaction 2-phosphoglycolate + H2O = glycolate + phosphate. Its function is as follows. Dephosphorylates 2-phosphoglycolate, but does not contribute to photorespiratory metabolism. In Arabidopsis thaliana (Mouse-ear cress), this protein is Phosphoglycolate phosphatase 2 (PGLP2).